We begin with the raw amino-acid sequence, 248 residues long: Cytochrome c oxidase subunit 2 (248 aa).

The Mitochondrial intermembrane portion of the chain corresponds to 1–43; the sequence is MTNLLNNWLIINQFGYDLPEPWQLGLQDAAHPVMEEIIFFHDQ. Residues 44 to 65 traverse the membrane as a helical segment; the sequence is VMFILIIIITTVLWLIVKALSG. Residues 66 to 79 lie on the Mitochondrial matrix side of the membrane; that stretch reads KAYHRYLVDGTLLE. Residues 80 to 99 form a helical membrane-spanning segment; that stretch reads IIWTIVPAIILILIAFPSLK. The Mitochondrial intermembrane portion of the chain corresponds to 100 to 248; sequence LLYLMDEVMD…INWVLSGSDE (149 aa). Cu cation-binding residues include His180, Cys215, Glu217, Cys219, His223, and Met226. Mg(2+) is bound at residue Glu217.

The protein belongs to the cytochrome c oxidase subunit 2 family. As to quaternary structure, component of the cytochrome c oxidase (complex IV, CIV), a multisubunit enzyme composed of a catalytic core of 3 subunits and several supernumerary subunits. The complex exists as a monomer or a dimer and forms supercomplexes (SCs) in the inner mitochondrial membrane with ubiquinol-cytochrome c oxidoreductase (cytochrome b-c1 complex, complex III, CIII). Cu cation serves as cofactor.

It is found in the mitochondrion inner membrane. It catalyses the reaction 4 Fe(II)-[cytochrome c] + O2 + 8 H(+)(in) = 4 Fe(III)-[cytochrome c] + 2 H2O + 4 H(+)(out). Functionally, component of the cytochrome c oxidase, the last enzyme in the mitochondrial electron transport chain which drives oxidative phosphorylation. The respiratory chain contains 3 multisubunit complexes succinate dehydrogenase (complex II, CII), ubiquinol-cytochrome c oxidoreductase (cytochrome b-c1 complex, complex III, CIII) and cytochrome c oxidase (complex IV, CIV), that cooperate to transfer electrons derived from NADH and succinate to molecular oxygen, creating an electrochemical gradient over the inner membrane that drives transmembrane transport and the ATP synthase. Cytochrome c oxidase is the component of the respiratory chain that catalyzes the reduction of oxygen to water. Electrons originating from reduced cytochrome c in the intermembrane space (IMS) are transferred via the dinuclear copper A center (CU(A)) of subunit 2 and heme A of subunit 1 to the active site in subunit 1, a binuclear center (BNC) formed by heme A3 and copper B (CU(B)). The BNC reduces molecular oxygen to 2 water molecules using 4 electrons from cytochrome c in the IMS and 4 protons from the mitochondrial matrix. The sequence is that of Cytochrome c oxidase subunit 2 (COII) from Metridium senile (Brown sea anemone).